A 264-amino-acid chain; its full sequence is Teichoic acids export ATP-binding protein TagH (264 aa).

The ABC transporter domain occupies 5–243; it reads VNIKNVTKEY…YEAFLNDFKK (239 aa). 57-64 serves as a coordination point for ATP; it reads GINGSGKS.

This sequence belongs to the ABC transporter superfamily. Teichoic acids exporter (TC 3.A.1.104.1) family. In terms of assembly, the complex is composed of two ATP-binding proteins (TagH) and two transmembrane proteins (TagG).

It is found in the cell membrane. It carries out the reaction ATP + H2O + teichoic acidSide 1 = ADP + phosphate + teichoic acidSide 2.. Functionally, part of the ABC transporter complex TagGH involved in teichoic acids export. Responsible for energy coupling to the transport system. This chain is Teichoic acids export ATP-binding protein TagH, found in Staphylococcus aureus (strain USA300).